Here is a 517-residue protein sequence, read N- to C-terminus: Protein disulfide-isomerase A5 (517 aa).

The first 21 residues, 1-21, serve as a signal peptide directing secretion; the sequence is MARAWGLLLAIGVILPTWLSS. Cystine bridges form between Cys83/Cys92, Cys180/Cys183, Cys303/Cys306, and Cys424/Cys427. Thioredoxin domains follow at residues 132 to 259, 268 to 382, and 376 to 504; these read FLKD…NPQP, PWAD…NPEA, and WMQN…TLRE. The Prevents secretion from ER motif lies at 514-517; sequence REDL.

This sequence belongs to the protein disulfide isomerase family.

The protein localises to the endoplasmic reticulum lumen. The catalysed reaction is Catalyzes the rearrangement of -S-S- bonds in proteins.. This is Protein disulfide-isomerase A5 (Pdia5) from Rattus norvegicus (Rat).